The following is a 689-amino-acid chain: Glycine--tRNA ligase beta subunit (689 aa).

The protein belongs to the class-II aminoacyl-tRNA synthetase family. As to quaternary structure, tetramer of two alpha and two beta subunits.

It is found in the cytoplasm. It catalyses the reaction tRNA(Gly) + glycine + ATP = glycyl-tRNA(Gly) + AMP + diphosphate. This chain is Glycine--tRNA ligase beta subunit, found in Salmonella paratyphi A (strain ATCC 9150 / SARB42).